A 309-amino-acid chain; its full sequence is MILTVTMNPSIDISYPLDELKIDTVNRVVDVTKTAGGKGLNVTRVLSEFGDSVLATGLVGGKLGEFLVEHIDNQVKKDFFSIQGETRNCIAILHGDNQTEVLEKGPEVLEQEGQDFLEHFKKLLESVEVVAISGSLPAGLPVDYYASLVELANQAGKPVVLDCSGAALQAVLESPHKPTVIKPNNEELSQLLGREVSEDLDELKEVLQEPLFAGIEWIIVSLGANGTFAKHGDTFYKVDIPRIQVVNPVGSGDSTVAGISSGLLHKESDAELLIKANVLGMLNTQEKMTGHVNMANYQALYDQLIVKEV.

It belongs to the carbohydrate kinase PfkB family. LacC subfamily.

The catalysed reaction is D-tagatofuranose 6-phosphate + ATP = D-tagatofuranose 1,6-bisphosphate + ADP + H(+). Its pathway is carbohydrate metabolism; D-tagatose 6-phosphate degradation; D-glyceraldehyde 3-phosphate and glycerone phosphate from D-tagatose 6-phosphate: step 1/2. This is Tagatose-6-phosphate kinase from Streptococcus pneumoniae (strain ATCC 700669 / Spain 23F-1).